Here is a 93-residue protein sequence, read N- to C-terminus: Large ribosomal subunit protein uL23cz/uL23cy (93 aa).

The protein belongs to the universal ribosomal protein uL23 family. Part of the 50S ribosomal subunit.

It is found in the plastid. It localises to the chloroplast. Its function is as follows. Binds to 23S rRNA. This Drimys granadensis protein is Large ribosomal subunit protein uL23cz/uL23cy (rpl23-A).